The primary structure comprises 134 residues: Loki profilin-1 (134 aa).

Residues 55–62 (LALGKKGI) are loki loop.

This sequence belongs to the Asgard profilin family.

Its subcellular location is the cytoplasm. It localises to the cytoskeleton. With respect to regulation, inhibition of rabbit actin polymerization is reduced by phosphatidylinositol-(4,5)-P2(1,2-dipalmitoyl), a soluble form of the phospholipid phosphatidylinositol, suggesting an unknown lipid might regulate actin-profilin interaction in vivo. Binds to actin and affects the structure of the cytoskeleton. At high concentrations inhibits spontaneous rabbit actin nucleation. This strongly suggests this archaea has a profilin-regulated actin system, and actin-type genes can be identified in this organism. The sequence is that of Loki profilin-1 from Lokiarchaeum sp. (strain GC14_75).